The sequence spans 352 residues: Inner membrane protein YeeA (352 aa).

Residues 1 to 25 lie on the Cytoplasmic side of the membrane; sequence MRADKSLSPFEIRVYRHYRIVHGTR. 2 consecutive transmembrane segments (helical) span residues 26–46 and 47–67; these read VALA…PEST and WPLV…NVVP. Position 68 (Arg-68) is a topological domain, cytoplasmic. The chain crosses the membrane as a helical span at residues 69–89; sequence AFERIGGTVLGSILGLIALQL. Residue Glu-90 is a topological domain, periplasmic. Residues 91 to 111 form a helical membrane-spanning segment; that stretch reads LISLPLMLVWCAAAMFLCGWL. Residues 112-117 are Cytoplasmic-facing; that stretch reads ALGKKP. Residues 118-138 form a helical membrane-spanning segment; the sequence is YQGLLIGVTLAIVVGSPTGEI. Residues 139 to 147 lie on the Periplasmic side of the membrane; sequence DTALWRSGD. The chain crosses the membrane as a helical span at residues 148–168; sequence VILGSLLAMLFTGIWPQRAFI. The Cytoplasmic portion of the chain corresponds to 169 to 352; it reads HWRIQLAKSL…SNLICRALRK (184 aa).

The protein resides in the cell inner membrane. The protein is Inner membrane protein YeeA (yeeA) of Escherichia coli (strain K12).